Here is a 547-residue protein sequence, read N- to C-terminus: Chaperonin GroEL (547 aa).

ATP is bound by residues 30-33, lysine 51, 87-91, glycine 415, 479-481, and aspartate 495; these read TLGP, DGTTT, and NAA.

This sequence belongs to the chaperonin (HSP60) family. As to quaternary structure, forms a cylinder of 14 subunits composed of two heptameric rings stacked back-to-back. Interacts with the co-chaperonin GroES.

Its subcellular location is the cytoplasm. It catalyses the reaction ATP + H2O + a folded polypeptide = ADP + phosphate + an unfolded polypeptide.. In terms of biological role, together with its co-chaperonin GroES, plays an essential role in assisting protein folding. The GroEL-GroES system forms a nano-cage that allows encapsulation of the non-native substrate proteins and provides a physical environment optimized to promote and accelerate protein folding. This Enterobacter sp. (strain 638) protein is Chaperonin GroEL.